The following is a 123-amino-acid chain: MAEELRRFLYKKLTSVEGLHAIVVSDRDGVPVIKVANENAPEQALRPAFLSTFALATDQGSKLGLSKNKSIICYYSTYQVVQFNQLPLVVSFIASSNANTGLILSLEKELGSLFKELRQAVIS.

The protein belongs to the LAMTOR3 family. As to quaternary structure, part of the Ragulator complex composed of lamtor1, lamtor2, lamtor3, lamtor4 and lamtor5. The Ragulator complex interacts with slc38a9; the probable amino acid sensor. Component of the lysosomal folliculin complex (LFC).

Its subcellular location is the late endosome membrane. Functionally, as part of the Ragulator complex it is involved in amino acid sensing and activation of mTORC1, a signaling complex promoting cell growth in response to growth factors, energy levels, and amino acids. Activated by amino acids through a mechanism involving the lysosomal V-ATPase, the Ragulator plays a dual role for the small GTPases Rag (RagA/RRAGA, RagB/RRAGB, RagC/RRAGC and/or RagD/RRAGD): it (1) acts as a guanine nucleotide exchange factor (GEF), activating the small GTPases Rag and (2) mediates recruitment of Rag GTPases to the lysosome membrane. Activated Ragulator and Rag GTPases function as a scaffold recruiting mTORC1 to lysosomes where it is in turn activated. The polypeptide is Ragulator complex protein LAMTOR3-A (lamtor3-a) (Xenopus laevis (African clawed frog)).